The primary structure comprises 59 residues: Aedesin (59 aa).

The signal sequence occupies residues 1 to 23 (MNFTKLFAIVLLAALVLLGQTEA).

Belongs to the cecropin family. Salivary gland (at protein level).

The protein localises to the secreted. Functionally, antimicrobial peptide. Exhibits antibacterial activity against Gram-negative bacteria, such as Escherichia coli, Pseudomonas aeruginosa, Acinetobacter baumannii and Klebsiella pneumoniae. Shows no antibacterial effects against Gram-positive bacteria, such as Staphylococcus aureus, Enterococcus faecalis and Enterococcus faecium. Exhibits antiviral activity against all four dengue virus serotypes and chikungunya virus. Exhibits leishmanicidal activity. Partially neutralizes lipopolysaccharides (LPS). Exhibits anti-inflammatory properties: inhibits LPS-induced iNOS/NOS2 transcription, nitric oxide (NO) and pro-inflammatory cytokine production in mouse macrophages and human peripheral blood mononuclear cells (PBMCs); inhibits LPS-induced activation of MAPK and NF-kappa-B signaling pathways in mouse macrophages. The polypeptide is Aedesin (Aedes aegypti (Yellowfever mosquito)).